We begin with the raw amino-acid sequence, 351 residues long: SLAM family member 6 (351 aa).

The signal sequence occupies residues 1–30 (MAVSRAPAPDSACQRMVWLFPLVFCLGSGS). Residues 31 to 239 (EVSQSSSDPQ…KGVLTNPPWN (209 aa)) lie on the Extracellular side of the membrane. The region spanning 36 to 130 (SSDPQLMNGV…YTAQITTKDS (95 aa)) is the Ig-like V-type domain. N-linked (GlcNAc...) asparagine glycans are attached at residues N82, N101, N112, N152, N159, N172, N186, N193, and N218. Residues 147–210 (NLETTNYTLL…RNSGDQTYVC (64 aa)) form the Ig-like C2-type domain. 2 cysteine pairs are disulfide-bonded: C162–C229 and C168–C210. Residues 240-262 (AVWFMTTISIISAVILIFVCWSI) traverse the membrane as a helical segment. Residues 263 to 351 (HVWKRRGSLP…KVNTLINYNS (89 aa)) are Cytoplasmic-facing. The tract at residues 272-295 (PLTSQHPESSQSTDGPGSPGNTVY) is disordered. 2 consecutive short sequence motifs (ITSM) follow at residues 293-298 (TVYAQV) and 317-322 (TIYSIV). Position 319 is a phosphotyrosine (Y319).

As to quaternary structure, homodimer. Interacts with PTN6 and, upon phosphorylation, with PTN11 and SH2D1A/SAP. In terms of processing, phosphorylated. Expressed on hematopoietic cells. Isoform 3 is expressed in thymocytes and B lymphocytes of C57Bl/6 strain.

Its subcellular location is the cell membrane. Self-ligand receptor of the signaling lymphocytic activation molecule (SLAM) family. SLAM receptors triggered by homo- or heterotypic cell-cell interactions are modulating the activation and differentiation of a wide variety of immune cells and thus are involved in the regulation and interconnection of both innate and adaptive immune response. Activities are controlled by presence or absence of small cytoplasmic adapter proteins, SH2D1A/SAP and/or SH2D1B/EAT-2. Triggers cytolytic activity only in natural killer cells (NK) expressing high surface densities of natural cytotoxicity receptors. Positive signaling in NK cells implicates phosphorylation of VAV1. NK cell activation seems to depend on SH2D1B and not on SH2D1A. In conjunction with SLAMF1 controls the transition between positive selection and the subsequent expansion and differentiation of the thymocytic natural killer T (NKT) cell lineage. Promotes T cell differentiation into a helper T-cell Th17 phenotype leading to increased IL-17 secretion; the costimulatory activity requires SH2D1A. Promotes recruitment of RORC to the IL-17 promoter. In conjunction with SLAMF1 and CD84/SLAMF5 may be a negative regulator of the humoral immune response. In the absence of SH2D1A/SAP can transmit negative signals to CD4(+) T-cells and NKT cells. Negatively regulates germinal center formation by inhibiting T-cell:B-cell adhesion; the function probably implicates increased association with PTPN6/SHP-1 via ITSMs in absence of SH2D1A/SAP. However, reported to mediated T-cell adhesion, to participate in stable T-cell:B-cell interactions and to be involved in maintaining B-cell tolerance in germinal centers and in preventing autoimmunity. Involved in regulation of autoimmunity. Isoform 3 may be suppressor of pathogenic T-cell proliferation. The sequence is that of SLAM family member 6 (Slamf6) from Mus musculus (Mouse).